Here is a 304-residue protein sequence, read N- to C-terminus: MTKQSLPDVAKETHSERFAPIDWVGMGAIELPVMLKQADGVYRIPARVDAKVSLDKKPSRGIHMSRLYLLSQELLTKSELSLGLLGTVTSEFLRTHEDLSTKALVQVQFEAPLVRKALKSNNQAWRSYPVITSAFNEEGQISYFVEVVVTYSSTCPASAALSRQLIQDGFKQNFSTDKPLDFDVVHSWLGTPQGIVATPHAQRSFARVKAEVGANYNYGDLIDIVEEALQTAVQGAVKREDEQEFALRNGQNLMFCEDAARRVKEALDAKADVLDYVAEFSHVESLHPHNAVSHISKGLKLRSF.

This sequence belongs to the GTP cyclohydrolase IV family.

The enzyme catalyses GTP + H2O = 7,8-dihydroneopterin 3'-triphosphate + formate + H(+). It functions in the pathway cofactor biosynthesis; 7,8-dihydroneopterin triphosphate biosynthesis; 7,8-dihydroneopterin triphosphate from GTP: step 1/1. In terms of biological role, converts GTP to 7,8-dihydroneopterin triphosphate. This chain is GTP cyclohydrolase FolE2, found in Bdellovibrio bacteriovorus (strain ATCC 15356 / DSM 50701 / NCIMB 9529 / HD100).